The following is a 210-amino-acid chain: Probable septum site-determining protein MinC (210 aa).

This sequence belongs to the MinC family. In terms of assembly, interacts with MinD and FtsZ.

Functionally, cell division inhibitor that blocks the formation of polar Z ring septums. Rapidly oscillates between the poles of the cell to destabilize FtsZ filaments that have formed before they mature into polar Z rings. Prevents FtsZ polymerization. The polypeptide is Probable septum site-determining protein MinC (Thermotoga neapolitana (strain ATCC 49049 / DSM 4359 / NBRC 107923 / NS-E)).